A 189-amino-acid polypeptide reads, in one-letter code: Interferon alpha-10 (189 aa).

Positions 1–23 (MALSFSLLMAVLVLSYKSICSLG) are cleaved as a signal peptide. 2 disulfide bridges follow: Cys24-Cys122 and Cys52-Cys162.

The protein belongs to the alpha/beta interferon family.

It is found in the secreted. Functionally, produced by macrophages, IFN-alpha have antiviral activities. Interferon stimulates the production of two enzymes: a protein kinase and an oligoadenylate synthetase. The protein is Interferon alpha-10 (IFNA10) of Homo sapiens (Human).